The sequence spans 371 residues: Queuine tRNA-ribosyltransferase (371 aa).

The active-site Nucleophile is the Asp-90. Asp-90 acts as the Proton acceptor in catalysis. Substrate is bound by residues 90 to 94, Ser-91, Asp-144, Gln-189, and Gly-215; that span reads DSGGF. The tract at residues 246 to 252 is RNA binding; the sequence is GVGTPEN. Residue Asp-265 is the Nucleophile of the active site. An RNA binding; important for wobble base 34 recognition region spans residues 270–274; sequence TRNAR. Zn(2+) is bound by residues Cys-303, Cys-305, Cys-308, and His-334.

Belongs to the queuine tRNA-ribosyltransferase family. In terms of assembly, homodimer. Within each dimer, one monomer is responsible for RNA recognition and catalysis, while the other monomer binds to the replacement base PreQ1. The cofactor is Zn(2+).

The catalysed reaction is 7-aminomethyl-7-carbaguanine + guanosine(34) in tRNA = 7-aminomethyl-7-carbaguanosine(34) in tRNA + guanine. It functions in the pathway tRNA modification; tRNA-queuosine biosynthesis. In terms of biological role, catalyzes the base-exchange of a guanine (G) residue with the queuine precursor 7-aminomethyl-7-deazaguanine (PreQ1) at position 34 (anticodon wobble position) in tRNAs with GU(N) anticodons (tRNA-Asp, -Asn, -His and -Tyr). Catalysis occurs through a double-displacement mechanism. The nucleophile active site attacks the C1' of nucleotide 34 to detach the guanine base from the RNA, forming a covalent enzyme-RNA intermediate. The proton acceptor active site deprotonates the incoming PreQ1, allowing a nucleophilic attack on the C1' of the ribose to form the product. After dissociation, two additional enzymatic reactions on the tRNA convert PreQ1 to queuine (Q), resulting in the hypermodified nucleoside queuosine (7-(((4,5-cis-dihydroxy-2-cyclopenten-1-yl)amino)methyl)-7-deazaguanosine). The chain is Queuine tRNA-ribosyltransferase from Helicobacter pylori (strain ATCC 700392 / 26695) (Campylobacter pylori).